Reading from the N-terminus, the 375-residue chain is MKLLANIFLSGLAILACVSCSKDEDPVLPLEGAKLSVAVKASGTATKAYNPNDVNELEGEAYINNLAVVVFNETGTELLGYKWEALSGAEHSAIIADVPTTKAVRARIIVLANVPRDLLSTVSTYDEFQTRLVDLSSQSQTNLTMSSQVIVTKSALSEEDNYLGYTDLGDQNVDGISDPILLTRVAARIDLVNISTRFAGTPFAGREVRIDAVGIYNMKTKSYYFSEADWGETEAPDAVRNSEDTSFEDLLVNDGTSISNTPFVHYVMENMKSDDHTMIAVKATLRGNSSYQDHTKIFTAVINAGGLQNGYDHNFIRRNYVYRLRIYFDGESFDNIPVTPDPGPGPDPEPEVDTNLNIAVQVVGWGPVMQHPVID.

A signal peptide spans 1–16; that stretch reads MKLLANIFLSGLAILA. Cysteine 17 carries N-palmitoyl cysteine lipidation. A lipid anchor (S-diacylglycerol cysteine) is attached at cysteine 17. Positions 17–47 are excised as a propeptide; it reads CVSCSKDEDPVLPLEGAKLSVAVKASGTATK.

It belongs to the bacteroidetes fimbrillin superfamily. FimA/Mfa1 family. As to quaternary structure, may be part of the fimbrial tip.

It localises to the fimbrium. It is found in the cell outer membrane. In terms of biological role, probably a component of the fimbrium tip. Fimbriae are filamentous appendages on the cell surface that mediate cell adhesion and biofilm formation. This chain is Putative fimbrium tip subunit Fim1C, found in Parabacteroides distasonis (strain ATCC 8503 / DSM 20701 / CIP 104284 / JCM 5825 / NCTC 11152).